The following is a 180-amino-acid chain: Fetal and adult testis-expressed transcript protein homolog (180 aa).

A disordered region spans residues 77-108 (GPQLRGVGVVGEQGDGGAQPQENPGGSQGMRS). The segment covering 84–93 (GVVGEQGDGG) has biased composition (gly residues). A compositionally biased stretch (polar residues) spans 96–107 (PQENPGGSQGMR). Residues 160 to 178 (VLLFTMLLSSCITNLWLWM) traverse the membrane as a helical segment.

Interacts with BIK and RNF183. Interacts with IMMT/MIC60and EMD.

It localises to the mitochondrion. It is found in the mitochondrion outer membrane. Its subcellular location is the endoplasmic reticulum membrane. Its function is as follows. Involved in the regulation of endoplasmic reticulum (ER)-mitochondria coupling. Negatively regulates the ER-mitochondria distance and Ca(2+) transfer from ER to mitochondria possibly implicating it in the regulation of apoptosis. May collaborate with RNF183 to restrain BIK protein levels thus regulating apoptotic signaling. This is Fetal and adult testis-expressed transcript protein homolog (FATE1) from Bos taurus (Bovine).